A 650-amino-acid polypeptide reads, in one-letter code: AP-1-like transcription factor YAP1 (650 aa).

Residues 1-89 (MSVSTAKRSL…AFRERKERKM (89 aa)) form a disordered region. A phosphoserine mark is found at Ser9, Ser14, and Ser17. 3 stretches are compositionally biased toward basic and acidic residues: residues 22–50 (EGSK…EQPK), 58–68 (KKQDLDPETKQ), and 80–89 (AFRERKERKM). 2 short sequence motifs (bipartite nuclear localization signal) span residues 35-42 (HRRTGTRD) and 68-75 (QKRTAQNR). Residues 64–127 (PETKQKRTAQ…ITLVNELKKY (64 aa)) form the bZIP domain. A basic motif region spans residues 67 to 90 (KQKRTAQNRAAQRAFRERKERKMK). A leucine-zipper region spans residues 92–120 (LEKKVQSLESIQQQNEVEATFLRDQLITL). Disordered stretches follow at residues 149 to 169 (HFSK…PNDD) and 183 to 251 (QYPL…PNSS). The span at 150–162 (FSKNNVNHSNSEP) shows a compositional bias: polar residues. Position 165 is a phosphothreonine (Thr165). Positions 195-209 (SKNVGKQLPSPNDPS) are enriched in polar residues. Phosphoserine is present on Ser204. The segment at 220–378 (QKKLSDATDS…YENSFSGFGR (159 aa)) is transcription activation 1. The segment covering 226-246 (ATDSSSATLDSLSNSNDVLNN) has biased composition (low complexity). A n-CRD region spans residues 303-315 (CSKMNQVCGTRQC). Cystine bridges form between Cys303/Cys598, Cys310/Cys629, Cys598/Cys620, Cys598/Cys629, and Cys620/Cys629. Residue Ser372 is modified to Phosphoserine. Over residues 392-414 (DNSTGSTDSTGSTGNKNKKNNNN) the composition is skewed to low complexity. Disordered stretches follow at residues 392–419 (DNST…DDVL), 510–532 (LFGE…DDES), and 551–591 (LQSV…VPSK). The interval 430–537 (NQVTNFFSPG…SDDESSLIKN (108 aa)) is transcription activation 2. Ser528 is modified (phosphoserine). Polar residues predominate over residues 551–570 (LQSVPGNESEISQKNGSSLQ). Residues 571 to 580 (NADKINNGND) show a composition bias toward low complexity. Residues 598-629 (CSEIWDRITTHPKYSDIDVDGLCSELMAKAKC) form a c-CRD region. The Nuclear export signal motif lies at 614–621 (IDVDGLCS).

Belongs to the bZIP family. YAP subfamily. As to quaternary structure, interacts independent of oxidation state in the cytoplasm with the karyopherin PSE1/KAP121 (and less strongly with KAP123). The reduced form of YAP1 interacts in the nucleus with the nuclear export protein CRM1, and in the cytoplasm with YBP1 and the peroxiredoxin HYR1/GPX3/ORP1. Interacts with RBG1. Post-translationally, depending on the oxidative stress inducing agent, YAP1 can undergo two distinct conformational changes, both involving disulfide bond formation, and both masking the nuclear export signal, thus abolishing nuclear export by CRM1/exportin 1. The disulfide stress-inducing agent diamide leads to the formation of one of three possible disulfide bonds in the c-CRD. Peroxide stress induces the formation of the HYR1/GPX3- and YBP1-dependent interdomain disulfide bond between Cys-303 and Cys-598 (causing nuclear localization of YAP1), and the possibly stabilizing bond between Cys-310 and Cys-629 (required for full activity of YAP1).

Its subcellular location is the nucleus. The protein resides in the cytoplasm. In terms of biological role, transcription activator involved in oxidative stress response and redox homeostasis. Regulates the transcription of genes encoding antioxidant enzymes and components of the cellular thiol-reducing pathways, including the thioredoxin system (TRX2, TRR1), the glutaredoxin system (GSH1, GLR1), superoxide dismutase (SOD1, SOD2), glutathione peroxidase (GPX2), and thiol-specific peroxidases (TSA1, AHP1). The induction of some of these genes requires the cooperative action of both, YAP1 and SKN7. Preferentially binds to promoters with the core binding site 5'-TTA[CG]TAA-3'. Activity of the transcription factor is controlled through oxidation of specific cysteine residues resulting in the alteration of its subcellular location. Oxidative stress (as well as carbon stress, but not increased temperature, acidic pH, or ionic stress) induces nuclear accumulation and as a result YAP1 transcriptional activity. Activation by hydrogen peroxide or thiol-reactive chemicals elicit distinct adaptive gene responses. Nuclear export is restored when disulfide bonds are reduced by thioredoxin (TRX2), whose expression is controlled by YAP1, providing a mechanism for negative autoregulation. When overexpressed, YAP1 confers pleiotropic drug-resistance and increases cellular tolerance to cadmium, iron chelators and zinc. This Saccharomyces cerevisiae (strain ATCC 204508 / S288c) (Baker's yeast) protein is AP-1-like transcription factor YAP1.